The chain runs to 23 residues: GHACYRNCWREGNDEETCKERCG.

Intrachain disulfides connect Cys-4-Cys-22 and Cys-8-Cys-18. Residue Cys-22 is modified to Cysteine amide.

It belongs to the short scorpion toxin superfamily. Potassium channel inhibitor kappa-KTx family. Kappa-KTx 1 subfamily. Post-translationally, the two disulfide isomers globular (C1-C3, C2-C4) and beads (C1-C2, C3-C4) do not show activity on Kv10.1/KCNH1/EAG1. Expressed by the venom gland.

The protein resides in the secreted. Its function is as follows. Shows weak blocking activity on voltage-gated potassium channels Kv10.1/KCNH1/EAG1 (IC(50)=26 uM), Kv1.2/KCNA2 (Kd=150 uM), Kv1.3/KCNA3 (Kd=40 uM), Kv1.6/KCNA3 (16.6% inhibition at 40 uM toxin). The block is dose-dependent, voltage-independent, and reversible. Also shows a weak inhibitory activity on the plant pathogen F.culmorum growth (IC(50)=18.8-37.7 uM). This is Potassium channel toxin kappa-KTx 1.2 from Chersonesometrus fulvipes (Indian black scorpion).